Reading from the N-terminus, the 101-residue chain is Apolipoprotein C-II (101 aa).

The signal sequence occupies residues 1–22 (MGTRFLLALFLVLLVLGFEVQG). Residues 66 to 74 (TVDEKLRDM) form a lipid binding region. A lipoprotein lipase cofactor region spans residues 78 to 101 (STAAMSTYAGILTDQVLSMLKGEE).

This sequence belongs to the apolipoprotein C2 family. In terms of processing, proapolipoprotein C-II is synthesized as a sialic acid containing glycoprotein which is subsequently desialylated prior to its proteolytic processing. Proapolipoprotein C-II, the major form found in plasma undergoes proteolytic cleavage of its N-terminal hexapeptide to generate apolipoprotein C-II, which occurs as the minor form in plasma.

It localises to the secreted. In terms of biological role, component of chylomicrons, very low-density lipoproteins (VLDL), low-density lipoproteins (LDL), and high-density lipoproteins (HDL) in plasma. Plays an important role in lipoprotein metabolism as an activator of lipoprotein lipase. Both proapolipoprotein C-II and apolipoprotein C-II can activate lipoprotein lipase. The chain is Apolipoprotein C-II (APOC2) from Aotus nancymaae (Ma's night monkey).